Reading from the N-terminus, the 365-residue chain is 3-dehydroquinate synthase (365 aa).

NAD(+) is bound by residues 106-110, 130-131, K142, K151, and 169-172; these read GVIGD, TT, and FFAT. The Zn(2+) site is built by E184, H247, and H264.

The protein belongs to the sugar phosphate cyclases superfamily. Dehydroquinate synthase family. It depends on NAD(+) as a cofactor. Requires Co(2+) as cofactor. Zn(2+) serves as cofactor.

The protein localises to the cytoplasm. The catalysed reaction is 7-phospho-2-dehydro-3-deoxy-D-arabino-heptonate = 3-dehydroquinate + phosphate. The protein operates within metabolic intermediate biosynthesis; chorismate biosynthesis; chorismate from D-erythrose 4-phosphate and phosphoenolpyruvate: step 2/7. Catalyzes the conversion of 3-deoxy-D-arabino-heptulosonate 7-phosphate (DAHP) to dehydroquinate (DHQ). The chain is 3-dehydroquinate synthase from Listeria innocua serovar 6a (strain ATCC BAA-680 / CLIP 11262).